The following is a 215-amino-acid chain: Probable transaldolase 1 (215 aa).

Lys83 serves as the catalytic Schiff-base intermediate with substrate.

It belongs to the transaldolase family. Type 3B subfamily.

Its subcellular location is the cytoplasm. It catalyses the reaction D-sedoheptulose 7-phosphate + D-glyceraldehyde 3-phosphate = D-erythrose 4-phosphate + beta-D-fructose 6-phosphate. Its pathway is carbohydrate degradation; pentose phosphate pathway; D-glyceraldehyde 3-phosphate and beta-D-fructose 6-phosphate from D-ribose 5-phosphate and D-xylulose 5-phosphate (non-oxidative stage): step 2/3. Transaldolase is important for the balance of metabolites in the pentose-phosphate pathway. This is Probable transaldolase 1 from Bacillus anthracis.